A 570-amino-acid chain; its full sequence is Phosphoribosylaminoimidazole carboxylase (570 aa).

Positions 110 to 297 constitute an ATP-grasp domain; the sequence is KQHLVKNRIP…QFEAHLRAIL (188 aa). Residue 137–192 participates in ATP binding; sequence GSSLGYPFVLKSRTLAYDGRGNFVVKSEEDIEKGLEFLANRPLYAEKWASFKKELS.

It in the C-terminal section; belongs to the AIR carboxylase family. Class I subfamily.

The enzyme catalyses 5-amino-1-(5-phospho-D-ribosyl)imidazole-4-carboxylate + H(+) = 5-amino-1-(5-phospho-beta-D-ribosyl)imidazole + CO2. It functions in the pathway purine metabolism; IMP biosynthesis via de novo pathway; 5-amino-1-(5-phospho-D-ribosyl)imidazole-4-carboxylate from 5-amino-1-(5-phospho-D-ribosyl)imidazole (carboxylase route): step 1/1. This chain is Phosphoribosylaminoimidazole carboxylase (ADE2), found in Candida glabrata (strain ATCC 2001 / BCRC 20586 / JCM 3761 / NBRC 0622 / NRRL Y-65 / CBS 138) (Yeast).